A 920-amino-acid chain; its full sequence is Valine--tRNA ligase (920 aa).

A 'HIGH' region motif is present at residues 40 to 50 (PNVTGTLHMGH). A 'KMSKS' region motif is present at residues 522–526 (KMSKS). Position 525 (K525) interacts with ATP. Coiled-coil stretches lie at residues 642 to 668 (EWIR…DLLA) and 849 to 920 (AGVI…IESL).

Belongs to the class-I aminoacyl-tRNA synthetase family. ValS type 1 subfamily. As to quaternary structure, monomer.

The protein localises to the cytoplasm. It carries out the reaction tRNA(Val) + L-valine + ATP = L-valyl-tRNA(Val) + AMP + diphosphate. In terms of biological role, catalyzes the attachment of valine to tRNA(Val). As ValRS can inadvertently accommodate and process structurally similar amino acids such as threonine, to avoid such errors, it has a 'posttransfer' editing activity that hydrolyzes mischarged Thr-tRNA(Val) in a tRNA-dependent manner. In Coxiella burnetii (strain RSA 493 / Nine Mile phase I), this protein is Valine--tRNA ligase.